The following is a 91-amino-acid chain: Small ribosomal subunit protein bS20 (91 aa).

Residues 1–28 form a disordered region; that stretch reads MPNIKSAIKRTKTIEKRRAHRASQKSDL. Positions 7–23 are enriched in basic residues; it reads AIKRTKTIEKRRAHRAS.

The protein belongs to the bacterial ribosomal protein bS20 family.

Functionally, binds directly to 16S ribosomal RNA. The polypeptide is Small ribosomal subunit protein bS20 (Brevibacillus brevis (strain 47 / JCM 6285 / NBRC 100599)).